The chain runs to 123 residues: Small ribosomal subunit protein uS12 (123 aa).

The segment at 1–24 is disordered; that stretch reads MPTINQLIRKERKKQVKKSKSPAL. Over residues 10–20 the composition is skewed to basic residues; sequence KERKKQVKKSK. At Asp89 the chain carries 3-methylthioaspartic acid.

Belongs to the universal ribosomal protein uS12 family. Part of the 30S ribosomal subunit. Contacts proteins S8 and S17. May interact with IF1 in the 30S initiation complex.

In terms of biological role, with S4 and S5 plays an important role in translational accuracy. Interacts with and stabilizes bases of the 16S rRNA that are involved in tRNA selection in the A site and with the mRNA backbone. Located at the interface of the 30S and 50S subunits, it traverses the body of the 30S subunit contacting proteins on the other side and probably holding the rRNA structure together. The combined cluster of proteins S8, S12 and S17 appears to hold together the shoulder and platform of the 30S subunit. This is Small ribosomal subunit protein uS12 from Sulfurovum sp. (strain NBC37-1).